The following is a 287-amino-acid chain: Large ribosomal subunit protein uL2 (287 aa).

The disordered stretch occupies residues 220–287; that stretch reads VRGSVMNPCD…SKRSRGGRDS (68 aa). Residues 271–287 show a composition bias toward basic residues; the sequence is VRRRRRISKRSRGGRDS.

It belongs to the universal ribosomal protein uL2 family. In terms of assembly, part of the 50S ribosomal subunit. Forms a bridge to the 30S subunit in the 70S ribosome.

Functionally, one of the primary rRNA binding proteins. Required for association of the 30S and 50S subunits to form the 70S ribosome, for tRNA binding and peptide bond formation. It has been suggested to have peptidyltransferase activity; this is somewhat controversial. Makes several contacts with the 16S rRNA in the 70S ribosome. The polypeptide is Large ribosomal subunit protein uL2 (Prochlorococcus marinus (strain MIT 9515)).